Here is a 478-residue protein sequence, read N- to C-terminus: Muscarinic acetylcholine receptor M4 (478 aa).

At Met-1–Glu-30 the chain is on the extracellular side. 2 N-linked (GlcNAc...) asparagine glycosylation sites follow: Asn-8 and Asn-13. Residues Met-31–Met-53 form a helical membrane-spanning segment. Over Leu-54–Asn-67 the chain is Cytoplasmic. Residues Tyr-68–Tyr-88 traverse the membrane as a helical segment. Residues Thr-89 to Asp-105 are Extracellular-facing. Residues Cys-104 and Cys-184 are joined by a disulfide bond. A helical membrane pass occupies residues Leu-106 to Phe-127. Over Asp-128–Met-147 the chain is Cytoplasmic. A helical transmembrane segment spans residues Ala-148 to Trp-170. The Extracellular portion of the chain corresponds to Gln-171–Pro-192. Residues Ala-193–Ile-215 traverse the membrane as a helical segment. Residues His-216–Thr-400 are Cytoplasmic-facing. Positions Leu-271–Asn-333 are disordered. Pro residues predominate over residues Ala-274–Pro-285. Residues Asn-293–Asn-303 are compositionally biased toward polar residues. A compositionally biased stretch (low complexity) spans Thr-310–Leu-332. Residues Ile-401–Val-421 form a helical membrane-spanning segment. Over Asn-422 to Ser-435 the chain is Extracellular. The helical transmembrane segment at Ile-436–Cys-455 threads the bilayer. Over Asn-456–Arg-478 the chain is Cytoplasmic. A phosphothreonine mark is found at Thr-458, Thr-462, and Thr-476.

Belongs to the G-protein coupled receptor 1 family. Muscarinic acetylcholine receptor subfamily. CHRM4 sub-subfamily.

It localises to the cell membrane. The protein resides in the postsynaptic cell membrane. The muscarinic acetylcholine receptor mediates various cellular responses, including inhibition of adenylate cyclase, breakdown of phosphoinositides and modulation of potassium channels through the action of G proteins. Primary transducing effect is inhibition of adenylate cyclase. The chain is Muscarinic acetylcholine receptor M4 (Chrm4) from Rattus norvegicus (Rat).